Here is a 433-residue protein sequence, read N- to C-terminus: Glutamyl-tRNA reductase (433 aa).

Residues 49–52 (TCNR), Ser-109, 114–116 (EGQ), and Gln-120 each bind substrate. Residue Cys-50 is the Nucleophile of the active site. 189-194 (GAGKMS) contacts NADP(+).

This sequence belongs to the glutamyl-tRNA reductase family. In terms of assembly, homodimer.

It carries out the reaction (S)-4-amino-5-oxopentanoate + tRNA(Glu) + NADP(+) = L-glutamyl-tRNA(Glu) + NADPH + H(+). The protein operates within porphyrin-containing compound metabolism; protoporphyrin-IX biosynthesis; 5-aminolevulinate from L-glutamyl-tRNA(Glu): step 1/2. Its pathway is porphyrin-containing compound metabolism; chlorophyll biosynthesis. Its function is as follows. Catalyzes the NADPH-dependent reduction of glutamyl-tRNA(Glu) to glutamate 1-semialdehyde (GSA). This Acaryochloris marina (strain MBIC 11017) protein is Glutamyl-tRNA reductase.